The primary structure comprises 108 residues: U-scoloptoxin(10)-Sm1a (108 aa).

The N-terminal stretch at 1–24 (MNKQWLHFFSVLLLCYVIEETCSL) is a signal peptide.

It belongs to the scoloptoxin-10 family. Contains 3 disulfide bonds. As to expression, expressed by the venom gland.

The protein resides in the secreted. This Scolopendra morsitans (Tanzanian blue ringleg centipede) protein is U-scoloptoxin(10)-Sm1a.